Reading from the N-terminus, the 886-residue chain is DNA double-strand break repair Rad50 ATPase (886 aa).

Residues arginine 13, 33–39 (NGAGKSS), and glutamine 128 contribute to the ATP site. 2 coiled-coil regions span residues 183-360 (EQIK…LLET) and 400-433 (KEITEKLKKLIAKKSSLKTRGAQLKKAVEELKSA). A Zinc-hook domain is found at 392-489 (LSKAKEEEKE…RLEKVEKALE (98 aa)). 2 residues coordinate Zn(2+): cysteine 437 and cysteine 440. Coiled coils occupy residues 489-518 (EKQETVLKYRQMVDELKALENELSSHDAEK) and 545-713 (SSAS…KKVE). 792–797 (FLSGGE) provides a ligand contact to ATP.

The protein belongs to the SMC family. RAD50 subfamily. In terms of assembly, homodimer. Forms a heterotetramer composed of two Mre11 subunits and two Rad50 subunits. It depends on Zn(2+) as a cofactor.

Its function is as follows. Part of the Rad50/Mre11 complex, which is involved in the early steps of DNA double-strand break (DSB) repair. The complex may facilitate opening of the processed DNA ends to aid in the recruitment of HerA and NurA. Rad50 controls the balance between DNA end bridging and DNA resection via ATP-dependent structural rearrangements of the Rad50/Mre11 complex. The polypeptide is DNA double-strand break repair Rad50 ATPase (Archaeoglobus fulgidus (strain ATCC 49558 / DSM 4304 / JCM 9628 / NBRC 100126 / VC-16)).